The chain runs to 290 residues: Ribosomal RNA small subunit methyltransferase A (290 aa).

S-adenosyl-L-methionine is bound by residues asparagine 27, leucine 29, glycine 54, glutamate 75, aspartate 100, and asparagine 125.

The protein belongs to the class I-like SAM-binding methyltransferase superfamily. rRNA adenine N(6)-methyltransferase family. RsmA subfamily.

Its subcellular location is the cytoplasm. It catalyses the reaction adenosine(1518)/adenosine(1519) in 16S rRNA + 4 S-adenosyl-L-methionine = N(6)-dimethyladenosine(1518)/N(6)-dimethyladenosine(1519) in 16S rRNA + 4 S-adenosyl-L-homocysteine + 4 H(+). In terms of biological role, specifically dimethylates two adjacent adenosines (A1518 and A1519) in the loop of a conserved hairpin near the 3'-end of 16S rRNA in the 30S particle. May play a critical role in biogenesis of 30S subunits. This is Ribosomal RNA small subunit methyltransferase A from Streptococcus pyogenes serotype M5 (strain Manfredo).